The following is a 215-amino-acid chain: FMN-dependent NADH:quinone oxidoreductase (215 aa).

An FMN-binding site is contributed by 17–19 (SAS).

This sequence belongs to the azoreductase type 1 family. Homodimer. The cofactor is FMN.

It carries out the reaction 2 a quinone + NADH + H(+) = 2 a 1,4-benzosemiquinone + NAD(+). The catalysed reaction is N,N-dimethyl-1,4-phenylenediamine + anthranilate + 2 NAD(+) = 2-(4-dimethylaminophenyl)diazenylbenzoate + 2 NADH + 2 H(+). Functionally, quinone reductase that provides resistance to thiol-specific stress caused by electrophilic quinones. In terms of biological role, also exhibits azoreductase activity. Catalyzes the reductive cleavage of the azo bond in aromatic azo compounds to the corresponding amines. The sequence is that of FMN-dependent NADH:quinone oxidoreductase from Clostridium botulinum (strain Eklund 17B / Type B).